Consider the following 503-residue polypeptide: Glutamate/gamma-aminobutyrate antiporter (503 aa).

Residue 33–43 coordinates L-glutamate; the sequence is LHLVFFLLLGG. 7 helical membrane-spanning segments follow: residues 35-55, 153-173, 194-214, 232-252, 366-386, 407-427, and 440-460; these read LVFF…LCAA, FVVG…AYFI, VSTL…EASA, ILLV…VAAV, LTVV…FVLI, IIAG…FVPP, and MILL…YELH.

The protein belongs to the amino acid-polyamine-organocation (APC) superfamily. Glutamate:GABA antiporter (GGA) (TC 2.A.3.7) family.

It localises to the cell membrane. It carries out the reaction 4-aminobutanoate(in) + L-glutamate(out) = 4-aminobutanoate(out) + L-glutamate(in). Involved in glutaminase-dependent acid resistance. Exchanges extracellular glutamate (Glu) for intracellular gamma-aminobutyric acid (GABA) under acidic conditions. The sequence is that of Glutamate/gamma-aminobutyrate antiporter from Lactococcus lactis subsp. cremoris (strain MG1363).